The primary structure comprises 470 residues: MNISETLNSANTQCNIDSMDNRLHTLFPKVTSVRNAAQQTMPDEKNLKDSANIIKSFFRKTIAAQSYSRMFSQGSNFKSLNIAIDAPSDAKASFKAIEHLDRLSKHYISEIREKLHPLSAEELNLLSLIINSDLIFRHQSNSDLSDKILNIKSFNKIQSEGICTKRNTYADDIKKIANHDFVFFGVEISNHQKKHPLNTKHHTVDFGANAYIIDHDSPYGYMTLTDHFDNAIPPVFYHEHQSFLDKFSEVNKEVSRYVHGSKGIIDVPIFNTKDMKLGLGLYLIDFIRKSEDQSFKEFCYGKNLAPVDLDRIINFVFQPEYHIPRMVSTENFKKVKIREISLEEAVTASNYEEINKQVTNKKIALQALFLSITNQKEDVALYILSNFEITRQDVISIKHELYDIEYLLSAHNSSCKVLEYFINKGLVDVNTKFKKTNSGDCMLDNAIKYENAEMIKLLLKYGATSDNKYI.

The NAD(+) site is built by H138, Q139, S140, L144, I157, N167, F183, H201, F206, D226, and E320. E320 is an active-site residue. 3 ANK repeats span residues 363 to 392 (IALQALFLSITNQKEDVALYILSNFEITRQ), 399 to 431 (HELYDIEYLLSAHNSSCKVLEYFINKGLVDVNT), and 438 to 467 (SGDCMLDNAIKYENAEMIKLLLKYGATSDN).

The protein belongs to the OspC family. Interacts with host calmodulin (CALM1, CALM2 and/or CALM3); specifically interacts with the apo form of calmodulin, preventing calcium-binding.

It localises to the secreted. The protein resides in the host nucleus. The catalysed reaction is L-arginyl-[protein] + NAD(+) = ADP-riboxanated L-argininyl-[protein] + nicotinamide + NH4(+) + H(+). ADP-riboxanase effector that mediates arginine ADP-riboxanation of host caspases. ADP-riboxanation of host apoptotic caspases (CASP3, CASP8 and CASP9) prevents their activation, thereby inhibiting host cell extrinsic and intrinsic apoptosis. Does not catalyze ADP-riboxanation of host CASP4/CASP11. Independently of its ADP-riboxanase activity, acts as an inhibitor of calcium signaling by inhibiting host calmodulin, preventing activation of the JAK-STAT signaling pathway in response to interferon-beta. Mechanistically, acts by binding to the apo form of calmodulin, preventing calcium-binding and ability to activate host CaMK2 (CAMKII), which is required to stimulate the JAK-STAT signaling pathway in response to interferon-beta. This Shigella flexneri protein is Arginine ADP-riboxanase OspC1.